The sequence spans 354 residues: DNA polymerase IV (354 aa).

Positions 8–189 constitute a UmuC domain; that stretch reads IIHVDMDCFY…LPLEKIPGVG (182 aa). Mg(2+) contacts are provided by Asp12 and Asp107. Glu108 is an active-site residue.

It belongs to the DNA polymerase type-Y family. In terms of assembly, monomer. Mg(2+) is required as a cofactor.

Its subcellular location is the cytoplasm. The enzyme catalyses DNA(n) + a 2'-deoxyribonucleoside 5'-triphosphate = DNA(n+1) + diphosphate. In terms of biological role, poorly processive, error-prone DNA polymerase involved in untargeted mutagenesis. Copies undamaged DNA at stalled replication forks, which arise in vivo from mismatched or misaligned primer ends. These misaligned primers can be extended by PolIV. Exhibits no 3'-5' exonuclease (proofreading) activity. May be involved in translesional synthesis, in conjunction with the beta clamp from PolIII. The sequence is that of DNA polymerase IV from Vibrio parahaemolyticus serotype O3:K6 (strain RIMD 2210633).